A 617-amino-acid polypeptide reads, in one-letter code: Na(+)/H(+) antiporter NhaA 1 (617 aa).

Residues 1–433 (MTVTEQTTAR…GWAIFRITDW (433 aa)) form a na(+)/H(+) antiporter NhaA region. 11 helical membrane-spanning segments follow: residues 33-53 (AAAL…SPWA), 75-95 (MTVK…IVGL), 113-133 (AVPV…FLAF), 141-161 (HAWG…LAII), 171-191 (LFLL…IAVF), 194-214 (DAIQ…LALV), 234-254 (VALY…ALLI), 304-324 (VGPA…AGVL), 340-360 (WGVV…ATWL), 378-398 (IAGG…IVDI), and 411-431 (IGVL…FRIT). Positions 434–617 (LSPPEPVGLK…LIRALEAGRR (184 aa)) constitute a Thioredoxin domain.

In the N-terminal section; belongs to the NhaA Na(+)/H(+) (TC 2.A.33) antiporter family.

Its subcellular location is the cell membrane. It carries out the reaction Na(+)(in) + 2 H(+)(out) = Na(+)(out) + 2 H(+)(in). Its function is as follows. Na(+)/H(+) antiporter that extrudes sodium in exchange for external protons. This is Na(+)/H(+) antiporter NhaA 1 from Mycolicibacterium vanbaalenii (strain DSM 7251 / JCM 13017 / BCRC 16820 / KCTC 9966 / NRRL B-24157 / PYR-1) (Mycobacterium vanbaalenii).